Reading from the N-terminus, the 255-residue chain is MESFGVLSMKKLVAYITAALPDKEFTIDLALALSASGVDSLELGVPFSDPVADGPIIEHANLLALQKGFSLQDLYEITEKISPSIDTLWMGYLNPFHKVGFEQTCQKAKSLGVSGLIIPDVPFEESAPFEEQCLQNNLALIRFIAPTLGTSRIATIAPMARKFIYLVAYAGITGSGREEPLSPLIEEIRAINPEIPLYLGFGVNEHNAKEKSKEVDGVIVGSALVKVLLDERLTNTQKMTTICALAKSIKESINS.

Residues Glu-42 and Asp-53 each act as proton acceptor in the active site.

It belongs to the TrpA family. Tetramer of two alpha and two beta chains.

It carries out the reaction (1S,2R)-1-C-(indol-3-yl)glycerol 3-phosphate + L-serine = D-glyceraldehyde 3-phosphate + L-tryptophan + H2O. It functions in the pathway amino-acid biosynthesis; L-tryptophan biosynthesis; L-tryptophan from chorismate: step 5/5. Its function is as follows. The alpha subunit is responsible for the aldol cleavage of indoleglycerol phosphate to indole and glyceraldehyde 3-phosphate. This chain is Tryptophan synthase alpha chain, found in Wolinella succinogenes (strain ATCC 29543 / DSM 1740 / CCUG 13145 / JCM 31913 / LMG 7466 / NCTC 11488 / FDC 602W) (Vibrio succinogenes).